We begin with the raw amino-acid sequence, 448 residues long: Methylenetetrahydrofolate--tRNA-(uracil-5-)-methyltransferase TrmFO (448 aa).

10-15 (GAGLAG) contacts FAD.

This sequence belongs to the MnmG family. TrmFO subfamily. The cofactor is FAD.

It localises to the cytoplasm. It catalyses the reaction uridine(54) in tRNA + (6R)-5,10-methylene-5,6,7,8-tetrahydrofolate + NADH + H(+) = 5-methyluridine(54) in tRNA + (6S)-5,6,7,8-tetrahydrofolate + NAD(+). The catalysed reaction is uridine(54) in tRNA + (6R)-5,10-methylene-5,6,7,8-tetrahydrofolate + NADPH + H(+) = 5-methyluridine(54) in tRNA + (6S)-5,6,7,8-tetrahydrofolate + NADP(+). Its function is as follows. Catalyzes the folate-dependent formation of 5-methyl-uridine at position 54 (M-5-U54) in all tRNAs. The sequence is that of Methylenetetrahydrofolate--tRNA-(uracil-5-)-methyltransferase TrmFO from Lactococcus lactis subsp. cremoris (strain MG1363).